A 522-amino-acid chain; its full sequence is Glucans biosynthesis protein G (522 aa).

A signal peptide spans Met-1–Ala-33.

It belongs to the OpgD/OpgG family.

It localises to the periplasm. Its pathway is glycan metabolism; osmoregulated periplasmic glucan (OPG) biosynthesis. Functionally, involved in the biosynthesis of osmoregulated periplasmic glucans (OPGs). The polypeptide is Glucans biosynthesis protein G (Sodalis glossinidius (strain morsitans)).